The chain runs to 139 residues: Asp-hemolysin (139 aa).

Positions 1-5 (MASVQ) are excised as a propeptide. The interval 47 to 79 (TSEDVQQKTAPPGGSVNVNSCGRSDASSGTTGG) is disordered. Over residues 62–75 (VNVNSCGRSDASSG) the composition is skewed to polar residues.

The protein belongs to the aegerolysin family.

In Aspergillus fumigatus (strain ATCC MYA-4609 / CBS 101355 / FGSC A1100 / Af293) (Neosartorya fumigata), this protein is Asp-hemolysin.